We begin with the raw amino-acid sequence, 58 residues long: Ribulose bisphosphate carboxylase large chain (58 aa).

The propeptide occupies 1–2 (MS). P3 is modified (N-acetylproline). Residue K14 is modified to N6,N6,N6-trimethyllysine.

The protein belongs to the RuBisCO large chain family. Type I subfamily. Heterohexadecamer of 8 large chains and 8 small chains.

The protein resides in the plastid. It localises to the chloroplast. It catalyses the reaction 2 (2R)-3-phosphoglycerate + 2 H(+) = D-ribulose 1,5-bisphosphate + CO2 + H2O. The enzyme catalyses D-ribulose 1,5-bisphosphate + O2 = 2-phosphoglycolate + (2R)-3-phosphoglycerate + 2 H(+). Its function is as follows. RuBisCO catalyzes two reactions: the carboxylation of D-ribulose 1,5-bisphosphate, the primary event in carbon dioxide fixation, as well as the oxidative fragmentation of the pentose substrate in the photorespiration process. Both reactions occur simultaneously and in competition at the same active site. The protein is Ribulose bisphosphate carboxylase large chain (rbcL) of Euphorbia characias (Albanian spurge).